We begin with the raw amino-acid sequence, 168 residues long: Lipoprotein signal peptidase (168 aa).

3 consecutive transmembrane segments (helical) span residues 8–28 (TLLV…VVLL), 70–90 (KYFL…YLFF), and 104–124 (VLLC…GHIV). Residues aspartate 125 and aspartate 143 contribute to the active site. A helical membrane pass occupies residues 134-154 (WAFPTFNVADVLISLGTLLLV).

This sequence belongs to the peptidase A8 family.

The protein localises to the cell inner membrane. It catalyses the reaction Release of signal peptides from bacterial membrane prolipoproteins. Hydrolyzes -Xaa-Yaa-Zaa-|-(S,diacylglyceryl)Cys-, in which Xaa is hydrophobic (preferably Leu), and Yaa (Ala or Ser) and Zaa (Gly or Ala) have small, neutral side chains.. It participates in protein modification; lipoprotein biosynthesis (signal peptide cleavage). In terms of biological role, this protein specifically catalyzes the removal of signal peptides from prolipoproteins. This Chlamydia pneumoniae (Chlamydophila pneumoniae) protein is Lipoprotein signal peptidase.